The chain runs to 354 residues: DNA integrity scanning protein DisA (354 aa).

In terms of domain architecture, DAC spans 6-144 (EKELKSILKL…GHIKYVLRDS (139 aa)). Residues glycine 73, leucine 91, and 104–108 (TRHRT) contribute to the ATP site.

The protein belongs to the DisA family. In terms of assembly, homooctamer. Mg(2+) is required as a cofactor.

It carries out the reaction 2 ATP = 3',3'-c-di-AMP + 2 diphosphate. Participates in a DNA-damage check-point that is active prior to asymmetric division when DNA is damaged. DisA forms globular foci that rapidly scan along the chromosomes during sporulation, searching for lesions. When a lesion is present, DisA pauses at the lesion site. This triggers a cellular response that culminates in a temporary block in sporulation initiation. Functionally, also has diadenylate cyclase activity, catalyzing the condensation of 2 ATP molecules into cyclic di-AMP (c-di-AMP). c-di-AMP acts as a signaling molecule that couples DNA integrity with progression of sporulation. The rise in c-di-AMP level generated by DisA while scanning the chromosome, operates as a positive signal that advances sporulation; upon encountering a lesion, the DisA focus arrests at the damaged site and halts c-di-AMP synthesis. In Clostridium kluyveri (strain ATCC 8527 / DSM 555 / NBRC 12016 / NCIMB 10680 / K1), this protein is DNA integrity scanning protein DisA.